We begin with the raw amino-acid sequence, 135 residues long: uncharacterized protein (135 aa).

The next 4 membrane-spanning stretches (helical) occupy residues 7-25 (WSAA…EWTI), 29-51 (ILLT…TGNI), 64-85 (VFIF…EVGI), and 89-108 (ALIF…ISIF).

The protein belongs to the bacteriophage holin family. Cp-1 holin subfamily.

Its subcellular location is the cell membrane. This is an uncharacterized protein from Halalkalibacterium halodurans (strain ATCC BAA-125 / DSM 18197 / FERM 7344 / JCM 9153 / C-125) (Bacillus halodurans).